The sequence spans 120 residues: uncharacterized protein (120 aa).

A signal peptide spans 1–19 (MTSFAVVARLITRAPRVRA). Disordered stretches follow at residues 48 to 71 (VAKKADEGAQTISDAAGNLKDKAK) and 90 to 120 (DTVTGKTEETKESIKATAKTVERSMNTKNLK). The segment covering 90–103 (DTVTGKTEETKESI) has biased composition (basic and acidic residues).

This is an uncharacterized protein from Arabidopsis thaliana (Mouse-ear cress).